The chain runs to 100 residues: MNLTPREKDKLLISLAAIVARGRLERGVKLNHPEAVALISDFVVEGAREGRSVADLMQAGAHVVRAENCMEGVPEMLHSVQVEATFPDGTKLVTVHHPIR.

It belongs to the urease gamma subunit family. Heterotrimer of UreA (gamma), UreB (beta) and UreC (alpha) subunits. Three heterotrimers associate to form the active enzyme.

The protein localises to the cytoplasm. The enzyme catalyses urea + 2 H2O + H(+) = hydrogencarbonate + 2 NH4(+). Its pathway is nitrogen metabolism; urea degradation; CO(2) and NH(3) from urea (urease route): step 1/1. The chain is Urease subunit gamma from Cereibacter sphaeroides (strain ATCC 17029 / ATH 2.4.9) (Rhodobacter sphaeroides).